The sequence spans 357 residues: 3-isopropylmalate dehydrogenase (357 aa).

76 to 89 is a binding site for NAD(+); the sequence is GPQWDTIDPALRPE. Residues Arg96, Arg106, Arg134, and Asp224 each contribute to the substrate site. Asp224, Asp248, and Asp252 together coordinate Mg(2+). Residue 282–294 participates in NAD(+) binding; it reads GSAPDIAGQGVAN.

This sequence belongs to the isocitrate and isopropylmalate dehydrogenases family. LeuB type 1 subfamily. In terms of assembly, homodimer. Mg(2+) is required as a cofactor. Mn(2+) serves as cofactor.

It localises to the cytoplasm. The catalysed reaction is (2R,3S)-3-isopropylmalate + NAD(+) = 4-methyl-2-oxopentanoate + CO2 + NADH. Its pathway is amino-acid biosynthesis; L-leucine biosynthesis; L-leucine from 3-methyl-2-oxobutanoate: step 3/4. Its function is as follows. Catalyzes the oxidation of 3-carboxy-2-hydroxy-4-methylpentanoate (3-isopropylmalate) to 3-carboxy-4-methyl-2-oxopentanoate. The product decarboxylates to 4-methyl-2 oxopentanoate. In Xylella fastidiosa (strain Temecula1 / ATCC 700964), this protein is 3-isopropylmalate dehydrogenase.